The primary structure comprises 194 residues: Imidazoleglycerol-phosphate dehydratase (194 aa).

It belongs to the imidazoleglycerol-phosphate dehydratase family.

It localises to the cytoplasm. The enzyme catalyses D-erythro-1-(imidazol-4-yl)glycerol 3-phosphate = 3-(imidazol-4-yl)-2-oxopropyl phosphate + H2O. It participates in amino-acid biosynthesis; L-histidine biosynthesis; L-histidine from 5-phospho-alpha-D-ribose 1-diphosphate: step 6/9. This Lacticaseibacillus paracasei (strain ATCC 334 / BCRC 17002 / CCUG 31169 / CIP 107868 / KCTC 3260 / NRRL B-441) (Lactobacillus paracasei) protein is Imidazoleglycerol-phosphate dehydratase.